The primary structure comprises 157 residues: Transcriptional regulator MraZ (157 aa).

2 consecutive SpoVT-AbrB domains span residues 7–54 (TYEC…PMKE) and 83–126 (VRII…DKDL).

Belongs to the MraZ family. In terms of assembly, forms oligomers.

The protein localises to the cytoplasm. It is found in the nucleoid. This is Transcriptional regulator MraZ from Flavobacterium psychrophilum (strain ATCC 49511 / DSM 21280 / CIP 103535 / JIP02/86).